We begin with the raw amino-acid sequence, 494 residues long: Guanosine-5'-triphosphate,3'-diphosphate pyrophosphatase (494 aa).

This sequence belongs to the GppA/Ppx family. GppA subfamily.

The catalysed reaction is guanosine 3'-diphosphate 5'-triphosphate + H2O = guanosine 3',5'-bis(diphosphate) + phosphate + H(+). The protein operates within purine metabolism; ppGpp biosynthesis; ppGpp from GTP: step 2/2. Catalyzes the conversion of pppGpp to ppGpp. Guanosine pentaphosphate (pppGpp) is a cytoplasmic signaling molecule which together with ppGpp controls the 'stringent response', an adaptive process that allows bacteria to respond to amino acid starvation, resulting in the coordinated regulation of numerous cellular activities. The protein is Guanosine-5'-triphosphate,3'-diphosphate pyrophosphatase of Shigella flexneri serotype 5b (strain 8401).